A 132-amino-acid chain; its full sequence is Secreted RxLR effector protein BLR08 (132 aa).

A signal peptide spans Met1–Ser22. The N-linked (GlcNAc...) asparagine glycan is linked to Asn25. Residues Asn36–Asp57 are disordered. The RxLR-dEER signature appears at Arg37–Arg83. Residues Phe111 to Ile131 form a helical membrane-spanning segment.

Belongs to the RxLR effector family. As to quaternary structure, interacts with host transcription factor NAC069.

The protein resides in the secreted. The protein localises to the host endoplasmic reticulum membrane. In terms of biological role, secreted effector that inhibits stress-induced relocalization of the transcription factor NAC069 to the nucleus, thus affecting its broad role in abiotic and biotic stress responses. In Bremia lactucae (Lettuce downy mildew), this protein is Secreted RxLR effector protein BLR08.